Reading from the N-terminus, the 542-residue chain is CTP synthase (542 aa).

Positions M1–M265 are amidoligase domain. Position 13 (S13) interacts with CTP. Position 13 (S13) interacts with UTP. Residue S14–L19 participates in ATP binding. Residue Y54 participates in L-glutamine binding. D71 contributes to the ATP binding site. Mg(2+) is bound by residues D71 and E139. CTP-binding positions include D146–E148, K186–Q191, and K222. Residues K186–Q191 and K222 each bind UTP. One can recognise a Glutamine amidotransferase type-1 domain in the interval T291–L541. Residue G353 coordinates L-glutamine. Residue C380 is the Nucleophile; for glutamine hydrolysis of the active site. L-glutamine-binding positions include F381–Q384, E404, and R469. Active-site residues include H514 and E516.

Belongs to the CTP synthase family. In terms of assembly, homotetramer.

The catalysed reaction is UTP + L-glutamine + ATP + H2O = CTP + L-glutamate + ADP + phosphate + 2 H(+). It catalyses the reaction L-glutamine + H2O = L-glutamate + NH4(+). The enzyme catalyses UTP + NH4(+) + ATP = CTP + ADP + phosphate + 2 H(+). It participates in pyrimidine metabolism; CTP biosynthesis via de novo pathway; CTP from UDP: step 2/2. Its activity is regulated as follows. Allosterically activated by GTP, when glutamine is the substrate; GTP has no effect on the reaction when ammonia is the substrate. The allosteric effector GTP functions by stabilizing the protein conformation that binds the tetrahedral intermediate(s) formed during glutamine hydrolysis. Inhibited by the product CTP, via allosteric rather than competitive inhibition. Catalyzes the ATP-dependent amination of UTP to CTP with either L-glutamine or ammonia as the source of nitrogen. Regulates intracellular CTP levels through interactions with the four ribonucleotide triphosphates. This Rhodospirillum centenum (strain ATCC 51521 / SW) protein is CTP synthase.